We begin with the raw amino-acid sequence, 555 residues long: Bicyclo-germacrene synthase (555 aa).

Residues aspartate 311 and glutamate 315 each coordinate Mg(2+). The DDXXD motif signature appears at 311-315; that stretch reads DDTYE. Homodimerization regions lie at residues 316–322 and 392–429; these read YATLDEL and EAKW…VGVG. Aspartate 459 and glutamate 467 together coordinate Mg(2+).

The protein belongs to the terpene synthase family. Homodimer. The cofactor is Mn(2+). Mg(2+) is required as a cofactor. As to expression, expressed in peltate glandular trichomes. Present at low levels in flowers, leaves and stems.

It carries out the reaction (2E,6E)-farnesyl diphosphate = bicyclogermacrene + diphosphate. The catalysed reaction is (2E)-geranyl diphosphate = terpinolene + diphosphate. It catalyses the reaction (2E)-geranyl diphosphate = (4R)-limonene + diphosphate. The enzyme catalyses (2E)-geranyl diphosphate + H2O = (2E)-geraniol + diphosphate. It carries out the reaction (2E,6E)-farnesyl diphosphate = allo-aromadendrene + diphosphate. The protein operates within secondary metabolite biosynthesis; terpenoid biosynthesis. In terms of biological role, involved in the biosynthesis of phenolic sesquiterpenes natural products. Sesquiterpene synthase converting (2E,6E)-farnesyl diphosphate (FPP) to alloaromadendrene and bicyclo-germacrene. The product formation is dependent on the metal ions present and in presence of manganese, bicyclo-germacrene is greatly favored while both alloaromadendrene and bicyclo-germacrene are produced in equivalent amounts in the presence of magnesium. Can also convert geranyl diphosphate (GPP) to terpinolene, limonene and geraniol, and this conversion is not affected by the presence of magnesium or manganese. The chain is Bicyclo-germacrene synthase (TPS4) from Origanum vulgare (Wild marjoram).